The primary structure comprises 579 residues: Arginine--tRNA ligase (579 aa).

Positions 127–137 match the 'HIGH' region motif; that stretch reads PNLAKEMHVGH.

The protein belongs to the class-I aminoacyl-tRNA synthetase family. In terms of assembly, monomer.

Its subcellular location is the cytoplasm. The enzyme catalyses tRNA(Arg) + L-arginine + ATP = L-arginyl-tRNA(Arg) + AMP + diphosphate. The sequence is that of Arginine--tRNA ligase from Azotobacter vinelandii (strain DJ / ATCC BAA-1303).